The primary structure comprises 218 residues: Ropporin-1-like protein (218 aa).

The 38-residue stretch at 17–54 (PELPDILKQFTKAAIRTQPADVLQWSAGYFSALSRGDP) folds into the RIIa domain.

It belongs to the ropporin family. In terms of assembly, component of the axonemal radial spoke complex 1 (RS1), at least composed of spoke head proteins RSPH1, RSPH3, RSPH9 and the cilia-specific component RSPH4A or sperm-specific component RSPH6A, spoke stalk proteins RSPH14, DNAJB13, DYDC1, ROPN1L and NME5, and the anchor protein IQUB. May interact with AKAP3. Interacts with FSCB; the interaction increases upon spermatozoa capacitation conditions. Interacts with CFAP61. In terms of processing, sumoylated, sumoylation decreases upon spermatozoa capacitation conditions. As to expression, testis-specific. Expression is restricted to germ cells.

It localises to the cell projection. The protein localises to the cilium. Its subcellular location is the flagellum. Its function is as follows. Functions as part of axonemal radial spoke complexes that play an important part in the motility of sperm and cilia. Important for male fertility. With ROPN1, involved in fibrous sheath integrity and sperm motility, plays a role in PKA-dependent signaling processes required for spermatozoa capacitation. The sequence is that of Ropporin-1-like protein (Ropn1l) from Mus musculus (Mouse).